The chain runs to 363 residues: Dioxygenase sphC (363 aa).

Fe cation contacts are provided by H183, D185, and H259.

It belongs to the PhyH family. In terms of assembly, homodimer. Fe cation serves as cofactor.

It carries out the reaction sphingofungin B1 + 2-oxoglutarate + O2 = sphingofungin B + succinate + CO2. It participates in secondary metabolite biosynthesis. In terms of biological role, dioxygenase; part of the gene cluster that mediates the biosynthesis of sphingofungins, bioactive molecules acting as sphingolipid inhibitors via inhibiting serine palmitoyl transferase (SPT). Within the pathway, sphC catalyzes the hydrolxylation at C-4 to convert sphingofungin B1 into sphingofungin B as well as presphingofungin into sphingofungin B2. Sphingofungin biosynthesis starts with the PKS sphB that produces an C18 polyketide precursor 3-hydroxyoctadeca-4,10-dienoyl-ACP containing one delta-6 desaturation and one delta-12 desaturation. The aminoacyl transferase sphA uses the sphB product to produce 3-keto-presphingofungin by adding an aminomalonate molecule. SphF then reduces the C-3 ketone of 3-keto-presphingofungin which leads to presphingofungin. The cytochrome P450 monooxygenase sphH converts presphingofungin into sphingofungin B1 which is further converted to sphingofungin B by the dioxygenase sphC. SphC is also able to convert presphingofungin into sphingofungin B2. The acetyltransferase sphE acetylates sphingofungin B to produce sphingofungin C, but can also convert sphingofungin B1 into sphingofungin C1 and sphingofungin B2 into sphingofungin C2. Finally, sphingofungin C can be spontaneously converted into sphingofungin D. The protein is Dioxygenase sphC of Aspergillus fumigatus (strain CBS 144.89 / FGSC A1163 / CEA10) (Neosartorya fumigata).